A 376-amino-acid polypeptide reads, in one-letter code: Ribonucleoside-diphosphate reductase subunit beta (376 aa).

Fe cation contacts are provided by Asp85, Glu116, and His119. Residue Tyr123 is part of the active site. Fe cation contacts are provided by Glu205, Glu239, and His242.

It belongs to the ribonucleoside diphosphate reductase small chain family. Tetramer of two alpha and two beta subunits. Requires Fe cation as cofactor.

It catalyses the reaction a 2'-deoxyribonucleoside 5'-diphosphate + [thioredoxin]-disulfide + H2O = a ribonucleoside 5'-diphosphate + [thioredoxin]-dithiol. In terms of biological role, provides the precursors necessary for DNA synthesis. Catalyzes the biosynthesis of deoxyribonucleotides from the corresponding ribonucleotides. This chain is Ribonucleoside-diphosphate reductase subunit beta (nrdB), found in Buchnera aphidicola subsp. Schizaphis graminum (strain Sg).